The primary structure comprises 779 residues: Glucan endo-1,3-beta-D-glucosidase 2 (779 aa).

The disordered stretch occupies residues methionine 1–asparagine 71. Positions arginine 57 to asparagine 71 are enriched in polar residues. The beta-sandwich subdomain stretch occupies residues aspartate 73–aspartate 309. Residues aspartate 73–serine 779 form the GH81 domain. Residues aspartate 309–glutamine 400 form an alpha/beta subdomain region. The segment at isoleucine 375–serine 779 is sufficient for catalytic activity. Residues asparagine 415 to serine 779 are (alpha/beta)6 barrel subdomain. The active site involves aspartate 526. The (1,3-beta-D-glucosyl)n site is built by histidine 530, aspartate 607, glutamate 609, and glutamate 613. Residues glutamate 609 and glutamate 613 contribute to the active site. The tract at residues lysine 678–aspartate 680 is may provide specificity for triple-helical beta-glucan. Tyrosine 691 lines the (1,3-beta-D-glucosyl)n pocket.

Belongs to the glycosyl hydrolase 81 family.

The protein resides in the cytoplasm. It carries out the reaction Hydrolysis of (1-&gt;3)-beta-D-glucosidic linkages in (1-&gt;3)-beta-D-glucans.. Inhibited by mercury ions. In terms of biological role, cleaves internal linkages in 1,3-beta-glucan. The polypeptide is Glucan endo-1,3-beta-D-glucosidase 2 (Saccharomyces cerevisiae (strain ATCC 204508 / S288c) (Baker's yeast)).